The sequence spans 316 residues: Putative metal-binding protein TP_0034 (316 aa).

The first 19 residues, methionine 1–alanine 19, serve as a signal peptide directing secretion. Residues histidine 68, histidine 146, and histidine 210 each contribute to the a divalent metal cation site.

This sequence belongs to the bacterial solute-binding protein 9 family.

The protein resides in the periplasm. Its function is as follows. Part of an ATP-binding cassette (ABC) transport system involved in metal import. Binds a metal with high affinity and specificity and delivers it to the membrane permease for translocation into the cytoplasm. This chain is Putative metal-binding protein TP_0034, found in Treponema pallidum (strain Nichols).